Consider the following 940-residue polypeptide: Isoleucine--tRNA ligase (940 aa).

Residues 58–68 (PYANGDIHIGH) carry the 'HIGH' region motif. L-isoleucyl-5'-AMP is bound at residue Glu-564. Residues 605 to 609 (KMSKS) carry the 'KMSKS' region motif. Residue Lys-608 participates in ATP binding. Residues Cys-903, Cys-906, Cys-923, and Cys-926 each coordinate Zn(2+).

It belongs to the class-I aminoacyl-tRNA synthetase family. IleS type 1 subfamily. In terms of assembly, monomer. Zn(2+) serves as cofactor.

The protein resides in the cytoplasm. It carries out the reaction tRNA(Ile) + L-isoleucine + ATP = L-isoleucyl-tRNA(Ile) + AMP + diphosphate. Catalyzes the attachment of isoleucine to tRNA(Ile). As IleRS can inadvertently accommodate and process structurally similar amino acids such as valine, to avoid such errors it has two additional distinct tRNA(Ile)-dependent editing activities. One activity is designated as 'pretransfer' editing and involves the hydrolysis of activated Val-AMP. The other activity is designated 'posttransfer' editing and involves deacylation of mischarged Val-tRNA(Ile). This chain is Isoleucine--tRNA ligase, found in Shewanella piezotolerans (strain WP3 / JCM 13877).